The sequence spans 206 residues: MNRTKSSKRWLQEHFDDVYVKKAQAEGYRSRAVYKLKEIDDKESLIKPGMTVVDLGAAPGGWTQYASEKMRGSGRLVALDILPMDALPNVEFILGDFREDNVLQELINLIPQRTLDLLLSDMAPNMSGSSAIDIPRAMYLVELAFDFAEKMLKPGGNMLVKIFHGSGFDELVKQARASFEKVVIRKPSASRSRSKETYLLAKGYNL.

5 residues coordinate S-adenosyl-L-methionine: Gly-60, Trp-62, Asp-80, Asp-96, and Asp-121. Lys-161 (proton acceptor) is an active-site residue.

The protein belongs to the class I-like SAM-binding methyltransferase superfamily. RNA methyltransferase RlmE family.

The protein localises to the cytoplasm. The catalysed reaction is uridine(2552) in 23S rRNA + S-adenosyl-L-methionine = 2'-O-methyluridine(2552) in 23S rRNA + S-adenosyl-L-homocysteine + H(+). In terms of biological role, specifically methylates the uridine in position 2552 of 23S rRNA at the 2'-O position of the ribose in the fully assembled 50S ribosomal subunit. This Legionella pneumophila (strain Paris) protein is Ribosomal RNA large subunit methyltransferase E.